A 263-amino-acid polypeptide reads, in one-letter code: Acyl-[acyl-carrier-protein]--UDP-N-acetylglucosamine O-acyltransferase (263 aa).

Belongs to the transferase hexapeptide repeat family. LpxA subfamily. As to quaternary structure, homotrimer.

The protein resides in the cytoplasm. It catalyses the reaction a (3R)-hydroxyacyl-[ACP] + UDP-N-acetyl-alpha-D-glucosamine = a UDP-3-O-[(3R)-3-hydroxyacyl]-N-acetyl-alpha-D-glucosamine + holo-[ACP]. Its pathway is glycolipid biosynthesis; lipid IV(A) biosynthesis; lipid IV(A) from (3R)-3-hydroxytetradecanoyl-[acyl-carrier-protein] and UDP-N-acetyl-alpha-D-glucosamine: step 1/6. Involved in the biosynthesis of lipid A, a phosphorylated glycolipid that anchors the lipopolysaccharide to the outer membrane of the cell. This is Acyl-[acyl-carrier-protein]--UDP-N-acetylglucosamine O-acyltransferase from Caulobacter vibrioides (strain ATCC 19089 / CIP 103742 / CB 15) (Caulobacter crescentus).